The chain runs to 315 residues: Eukaryotic translation initiation factor 2 subunit 1 (315 aa).

Residues 17–88 form the S1 motif domain; the sequence is DDVVMVNVRS…DKGYIDLSKR (72 aa). Residues Ser-49 and Ser-52 each carry the phosphoserine modification. The disordered stretch occupies residues 292-315; it reads RLEKENAEVDGDDDAEEMEAKTED. Acidic residues predominate over residues 299–308; the sequence is EVDGDDDAEE.

It belongs to the eIF-2-alpha family. In terms of assembly, eukaryotic translation initiation factor 2 eIF2 is a heterotrimeric complex composed of an alpha, a beta and a gamma subunit. In terms of processing, phosphorylation at Ser-49 and Ser-52 stabilizes the eIF-2/GDP/eIF2B complex and prevents GDP/GTP exchange reaction, thus impairing the recycling of eIF-2 between successive rounds of initiation and leading to global inhibition of translation, while concomitantly initiating the preferential translation of integrated stress response (ISR)-specific mRNAs.

The protein resides in the cytoplasm. It is found in the stress granule. Its subcellular location is the cytosol. Activity is regulated by phosphorylation at Ser-49 and Ser-52, which stabilizes the eIF-2/GDP/eIF2B complex and prevents the eIF2B-mediated exchange of GDP for GTP, thereby preventing the formation of the 43S pre-initiation complex (PIC). This results in the global attenuation of 5' cap-dependent protein synthesis and concomitant translation of ISR-specific mRNAs that contain a short upstream open reading frame (uORF) in their 5' UTR. Functions in the early steps of protein synthesis by forming a ternary complex with GTP and initiator tRNA. This complex binds to a 40S ribosomal subunit, followed by mRNA binding to form a 43S pre-initiation complex. Junction of the 60S ribosomal subunit to form the 80S initiation complex is preceded by hydrolysis of the GTP bound to eIF-2 and release of an eIF-2-GDP binary complex. In order for eIF-2 to recycle and catalyze another round of initiation, the GDP bound to eIF-2 must exchange with GTP by way of a reaction catalyzed by eIF2B. EIF2S1/eIF2-alpha is a key component of the integrated stress response (ISR), required for adaptation to various stress: phosphorylation by metabolic-stress sensing protein kinases in response to stress converts EIF2S1/eIF-2-alpha in a global protein synthesis inhibitor, leading to a attenuation of cap-dependent translation, while concomitantly initiating the preferential translation of ISR-specific mRNAs, such as the transcriptional activators ATF4 and QRICH1. This chain is Eukaryotic translation initiation factor 2 subunit 1 (eif2s1), found in Xenopus tropicalis (Western clawed frog).